Consider the following 609-residue polypeptide: Sterol O-acyltransferase 2 (609 aa).

A compositionally biased stretch (polar residues) spans 1–15 (MGRTNTSDQLNAISD). Positions 1 to 41 (MGRTNTSDQLNAISDKNTKRKSLALDNEYHNNSSSEDDSSK) are disordered. The next 6 helical transmembrane spans lie at 152–172 (FFGMYVLFWLATAFAMVNNLI), 195–215 (LFKVGLVDLAMYLSTYFAFFV), 229–249 (VGWWLQAAFDGLFLFFWLWIA), 253–273 (CLDFPWIAKVFLVLHSLVFIM), 402–422 (WSYVFGKTFGIFGLIFLMILI), and 451–471 (FLLMDMIPPFLMVYLFTFFLI). An FYXDWWN motif motif is present at residues 490 to 496 (FYGPWWS). The next 2 membrane-spanning stretches (helical) occupy residues 534–554 (AAIITFLLSSLVHELVMYVIF) and 589–609 (IICWFGFISGPSIICTLYLVF). Residue histidine 546 is part of the active site.

It belongs to the membrane-bound acyltransferase family. Sterol o-acyltransferase subfamily.

The protein localises to the endoplasmic reticulum membrane. With respect to regulation, inhibited by the protoberberine derivative HWY-289 in a non-competitive manner. Inhibited by miconazole. Not inhibited by CI-976, polyoxin D, amphotericin B or nikkomycin Z. Sterol O-acyltransferase that catalyzes the formation of stery esters. The sequence is that of Sterol O-acyltransferase 2 from Candida albicans (Yeast).